We begin with the raw amino-acid sequence, 90 residues long: MEKLFVLVFALTLLAFSSEASPILTEKQAKQLLRSRRQDRPSKPGFPDEPMREYMHHLLALEHRAEEQFLEHWLNPHCKPHCDRNIVQPV.

The first 20 residues, 1 to 20 (MEKLFVLVFALTLLAFSSEA), serve as a signal peptide directing secretion. The disordered stretch occupies residues 31–50 (QLLRSRRQDRPSKPGFPDEP).

The protein resides in the secreted. This is an uncharacterized protein from Rattus norvegicus (Rat).